Consider the following 228-residue polypeptide: 2-C-methyl-D-erythritol 4-phosphate cytidylyltransferase (228 aa).

This sequence belongs to the IspD/TarI cytidylyltransferase family. IspD subfamily.

It catalyses the reaction 2-C-methyl-D-erythritol 4-phosphate + CTP + H(+) = 4-CDP-2-C-methyl-D-erythritol + diphosphate. Its pathway is isoprenoid biosynthesis; isopentenyl diphosphate biosynthesis via DXP pathway; isopentenyl diphosphate from 1-deoxy-D-xylulose 5-phosphate: step 2/6. In terms of biological role, catalyzes the formation of 4-diphosphocytidyl-2-C-methyl-D-erythritol from CTP and 2-C-methyl-D-erythritol 4-phosphate (MEP). The chain is 2-C-methyl-D-erythritol 4-phosphate cytidylyltransferase from Nostoc sp. (strain PCC 7120 / SAG 25.82 / UTEX 2576).